A 123-amino-acid polypeptide reads, in one-letter code: Small ribosomal subunit protein uS13 (123 aa).

The protein belongs to the universal ribosomal protein uS13 family. In terms of assembly, part of the 30S ribosomal subunit. Forms a loose heterodimer with protein S19. Forms two bridges to the 50S subunit in the 70S ribosome.

Located at the top of the head of the 30S subunit, it contacts several helices of the 16S rRNA. In the 70S ribosome it contacts the 23S rRNA (bridge B1a) and protein L5 of the 50S subunit (bridge B1b), connecting the 2 subunits; these bridges are implicated in subunit movement. Contacts the tRNAs in the A and P-sites. In Anaplasma marginale (strain St. Maries), this protein is Small ribosomal subunit protein uS13.